The sequence spans 121 residues: Putative iron-sulfur cluster insertion protein ErpA (121 aa).

C49, C113, and C115 together coordinate iron-sulfur cluster.

It belongs to the HesB/IscA family. As to quaternary structure, homodimer. Iron-sulfur cluster serves as cofactor.

Its function is as follows. Required for insertion of 4Fe-4S clusters. The sequence is that of Putative iron-sulfur cluster insertion protein ErpA from Paracidovorax citrulli (strain AAC00-1) (Acidovorax citrulli).